Here is a 471-residue protein sequence, read N- to C-terminus: Isochorismate synthase MenF (471 aa).

Lys226 (proton acceptor) is an active-site residue. Catalysis depends on Glu275, which acts as the Proton donor. Positions 319 and 454 each coordinate Mg(2+).

This sequence belongs to the isochorismate synthase family. Mg(2+) is required as a cofactor.

The catalysed reaction is chorismate = isochorismate. Its pathway is quinol/quinone metabolism; 1,4-dihydroxy-2-naphthoate biosynthesis; 1,4-dihydroxy-2-naphthoate from chorismate: step 1/7. It functions in the pathway quinol/quinone metabolism; menaquinone biosynthesis. Its function is as follows. Catalyzes the conversion of chorismate to isochorismate. The chain is Isochorismate synthase MenF from Bacillus subtilis (strain 168).